A 264-amino-acid chain; its full sequence is Proliferating cell nuclear antigen (264 aa).

A DNA-binding region spans residues 61-80; that stretch reads RCDRNLAMGINMTSMAKIMK.

It belongs to the PCNA family. As to quaternary structure, homotrimer. Forms a complex with activator 1 heteropentamer in the presence of ATP.

It localises to the nucleus. Its function is as follows. This protein is an auxiliary protein of DNA polymerase delta and is involved in the control of eukaryotic DNA replication by increasing the polymerase's processibility during elongation of the leading strand. The chain is Proliferating cell nuclear antigen (PCNA) from Styela clava (Sea squirt).